Here is a 302-residue protein sequence, read N- to C-terminus: tRNA-cytidine(32) 2-sulfurtransferase (302 aa).

The PP-loop motif motif lies at 43 to 48; it reads SGGKDS. Residues Cys118, Cys121, and Cys209 each contribute to the [4Fe-4S] cluster site.

Belongs to the TtcA family. As to quaternary structure, homodimer. The cofactor is Mg(2+). Requires [4Fe-4S] cluster as cofactor.

The protein resides in the cytoplasm. The enzyme catalyses cytidine(32) in tRNA + S-sulfanyl-L-cysteinyl-[cysteine desulfurase] + AH2 + ATP = 2-thiocytidine(32) in tRNA + L-cysteinyl-[cysteine desulfurase] + A + AMP + diphosphate + H(+). The protein operates within tRNA modification. Functionally, catalyzes the ATP-dependent 2-thiolation of cytidine in position 32 of tRNA, to form 2-thiocytidine (s(2)C32). The sulfur atoms are provided by the cysteine/cysteine desulfurase (IscS) system. The protein is tRNA-cytidine(32) 2-sulfurtransferase of Polynucleobacter necessarius subsp. necessarius (strain STIR1).